Reading from the N-terminus, the 610-residue chain is Glutamine--fructose-6-phosphate aminotransferase [isomerizing] (610 aa).

The active-site Nucleophile; for GATase activity is the Cys2. In terms of domain architecture, Glutamine amidotransferase type-2 spans 2-218 (CGIVGAVAQR…EGDVAEITRR (217 aa)). 2 SIS domains span residues 286-426 (AVEI…QQNR) and 459-600 (LAPD…VDQP). Lys605 serves as the catalytic For Fru-6P isomerization activity.

As to quaternary structure, homodimer.

The protein localises to the cytoplasm. The enzyme catalyses D-fructose 6-phosphate + L-glutamine = D-glucosamine 6-phosphate + L-glutamate. Its function is as follows. Catalyzes the first step in hexosamine metabolism, converting fructose-6P into glucosamine-6P using glutamine as a nitrogen source. The chain is Glutamine--fructose-6-phosphate aminotransferase [isomerizing] from Aliivibrio fischeri (strain ATCC 700601 / ES114) (Vibrio fischeri).